The sequence spans 608 residues: Albumin (608 aa).

The signal sequence occupies residues 1–18 (MKWVTFISLLFLFSSAYS). Positions 19–24 (RGVFRR) are excised as a propeptide. Albumin domains are found at residues 19–210 (RGVF…DALE), 211–403 (GKSL…EFQP), and 404–601 (LVDE…KLVE). Residue H27 coordinates Cu cation. Residue S29 is modified to Phosphoserine. The Ca(2+) site is built by E30 and D37. Residues C77 and C86 are joined by a disulfide bond. Phosphoserine occurs at positions 82 and 89. H91 lines the Zn(2+) pocket. Cystine bridges form between C99-C115, C114-C125, C148-C193, C192-C201, C224-C270, and C269-C277. Phosphothreonine is present on T107. An N6-succinyllysine modification is found at K229. Ca(2+) is bound at residue E268. The Zn(2+) site is built by H271 and D273. Ca(2+)-binding residues include D273, E276, D279, and D283. Intrachain disulfides connect C289–C303, C302–C313, C340–C385, C384–C393, C416–C462, C461–C472, C485–C501, and C500–C511. S297 bears the Phosphoserine mark. Residue S443 is modified to Phosphoserine. A phosphothreonine mark is found at T444 and T446. Position 460 is an N6-succinyllysine (K460). S513 bears the Phosphoserine mark. 2 cysteine pairs are disulfide-bonded: C538-C583 and C582-C591. K558 carries the N6-methyllysine modification. T570 carries the post-translational modification Phosphothreonine. Residue K588 is modified to N6-succinyllysine.

This sequence belongs to the ALB/AFP/VDB family. As to quaternary structure, interacts with FCGRT; this interaction regulates ALB homeostasis. Interacts with TASOR. In plasma, occurs in a covalently-linked complex with chromophore-bound alpha-1-microglobulin; this interaction does not prevent fatty acid binding to ALB. Post-translationally, phosphorylated by FAM20C in the extracellular medium. Plasma.

It is found in the secreted. Binds water, Ca(2+), Na(+), K(+), fatty acids, hormones, bilirubin and drugs. Its main function is the regulation of the colloidal osmotic pressure of blood. Major zinc transporter in plasma, typically binds about 80% of all plasma zinc. Major calcium and magnesium transporter in plasma, binds approximately 45% of circulating calcium and magnesium in plasma. Potentially has more than two calcium-binding sites and might additionally bind calcium in a non-specific manner. The shared binding site between zinc and calcium at residue Asp-273 suggests a crosstalk between zinc and calcium transport in the blood. The rank order of affinity is zinc &gt; calcium &gt; magnesium. Binds to the bacterial siderophore enterobactin and inhibits enterobactin-mediated iron uptake of E.coli from ferric transferrin, and may thereby limit the utilization of iron and growth of enteric bacteria such as E.coli. Does not prevent iron uptake by the bacterial siderophore aerobactin. The chain is Albumin (ALB) from Oryctolagus cuniculus (Rabbit).